Consider the following 247-residue polypeptide: Geranylgeranylglyceryl phosphate synthase (247 aa).

Mg(2+) is bound by residues aspartate 24 and serine 53. Sn-glycerol 1-phosphate contacts are provided by residues 172-178 (YLEAGSG), 203-204 (GG), and 225-226 (GT).

It belongs to the GGGP/HepGP synthase family. Group II subfamily. Requires Mg(2+) as cofactor.

Its subcellular location is the cytoplasm. It carries out the reaction sn-glycerol 1-phosphate + (2E,6E,10E)-geranylgeranyl diphosphate = sn-3-O-(geranylgeranyl)glycerol 1-phosphate + diphosphate. The protein operates within membrane lipid metabolism; glycerophospholipid metabolism. In terms of biological role, prenyltransferase that catalyzes the transfer of the geranylgeranyl moiety of geranylgeranyl diphosphate (GGPP) to the C3 hydroxyl of sn-glycerol-1-phosphate (G1P). This reaction is the first ether-bond-formation step in the biosynthesis of archaeal membrane lipids. This chain is Geranylgeranylglyceryl phosphate synthase, found in Cenarchaeum symbiosum (strain A).